The primary structure comprises 245 residues: Probable phosphatase YcdX (245 aa).

Zn(2+) is bound by residues His-7, His-9, His-15, His-40, Glu-73, His-101, His-131, Asp-192, and His-194.

This sequence belongs to the PHP family. In terms of assembly, homotrimer. The cofactor is Zn(2+).

The chain is Probable phosphatase YcdX from Salmonella agona (strain SL483).